The primary structure comprises 421 residues: 4-hydroxy-3-methylbut-2-en-1-yl diphosphate synthase (flavodoxin) (421 aa).

The disordered stretch occupies residues 1 to 20 (MHDAVTRPTPPSDATSWPRR). The [4Fe-4S] cluster site is built by C311, C314, C357, and E364.

It belongs to the IspG family. [4Fe-4S] cluster serves as cofactor.

It catalyses the reaction (2E)-4-hydroxy-3-methylbut-2-enyl diphosphate + oxidized [flavodoxin] + H2O + 2 H(+) = 2-C-methyl-D-erythritol 2,4-cyclic diphosphate + reduced [flavodoxin]. It functions in the pathway isoprenoid biosynthesis; isopentenyl diphosphate biosynthesis via DXP pathway; isopentenyl diphosphate from 1-deoxy-D-xylulose 5-phosphate: step 5/6. Converts 2C-methyl-D-erythritol 2,4-cyclodiphosphate (ME-2,4cPP) into 1-hydroxy-2-methyl-2-(E)-butenyl 4-diphosphate. This Stenotrophomonas maltophilia (strain R551-3) protein is 4-hydroxy-3-methylbut-2-en-1-yl diphosphate synthase (flavodoxin).